Reading from the N-terminus, the 298-residue chain is Tyrosine recombinase XerD (298 aa).

Residues 3-88 (SSHNNLLQNF…AIRQFYKFLK (86 aa)) form the Core-binding (CB) domain. A Tyr recombinase domain is found at 109–292 (SIPDYLTQDE…ANKTLREVHK (184 aa)). Residues Arg-149, Lys-173, His-244, Arg-247, and His-270 contribute to the active site. Tyr-279 functions as the O-(3'-phospho-DNA)-tyrosine intermediate in the catalytic mechanism.

This sequence belongs to the 'phage' integrase family. XerD subfamily. In terms of assembly, forms a cyclic heterotetrameric complex composed of two molecules of XerC and two molecules of XerD.

The protein localises to the cytoplasm. In terms of biological role, site-specific tyrosine recombinase, which acts by catalyzing the cutting and rejoining of the recombining DNA molecules. The XerC-XerD complex is essential to convert dimers of the bacterial chromosome into monomers to permit their segregation at cell division. It also contributes to the segregational stability of plasmids. The polypeptide is Tyrosine recombinase XerD (Leptospira interrogans serogroup Icterohaemorrhagiae serovar copenhageni (strain Fiocruz L1-130)).